The sequence spans 31 residues: Sarcolipin (31 aa).

The Cytoplasmic portion of the chain corresponds to 1-7; sequence MGINTRE. Residues 8-26 form a helical membrane-spanning segment; that stretch reads LFLNFTIVLITVILMWLLV. Over 27–31 the chain is Lumenal; sequence RSYQY.

The protein belongs to the sarcolipin family. As to quaternary structure, homooligomer. Can also form heterooligomers with other sarcoplasmic/endoplasmic reticulum calcium ATPase (SERCA) regulators ARLN, ERLN, PLN and STRIT1/DWORF. Monomer. Interacts with calcium ATPase ATP2A1/SERCA1. Interacts as a monomer with ATP2A2/SERCA2; the interaction decreases ATP2A2 Ca(2+) affinity. Interacts with VMP1; VMP1 competes with PLN and SLN to prevent them from forming an inhibitory complex with ATP2A2.

The protein localises to the sarcoplasmic reticulum membrane. The protein resides in the endoplasmic reticulum membrane. Its function is as follows. Reversibly inhibits the activity of ATP2A1/SERCA1 and ATP2A2/SERCA2 in sarcoplasmic reticulum by decreasing the apparent affinity of the ATPase for Ca(2+). Also inhibits the activity of ATP2A3/SERCA3. Modulates calcium re-uptake during muscle relaxation and plays an important role in calcium homeostasis in muscle. Required for muscle-based, non-shivering thermogenesis. This Homo sapiens (Human) protein is Sarcolipin.